The chain runs to 436 residues: UDP-N-acetylmuramoylalanine--D-glutamate ligase (436 aa).

An ATP-binding site is contributed by Gly-112–Thr-118.

This sequence belongs to the MurCDEF family.

It is found in the cytoplasm. The catalysed reaction is UDP-N-acetyl-alpha-D-muramoyl-L-alanine + D-glutamate + ATP = UDP-N-acetyl-alpha-D-muramoyl-L-alanyl-D-glutamate + ADP + phosphate + H(+). The protein operates within cell wall biogenesis; peptidoglycan biosynthesis. Its function is as follows. Cell wall formation. Catalyzes the addition of glutamate to the nucleotide precursor UDP-N-acetylmuramoyl-L-alanine (UMA). In Photorhabdus laumondii subsp. laumondii (strain DSM 15139 / CIP 105565 / TT01) (Photorhabdus luminescens subsp. laumondii), this protein is UDP-N-acetylmuramoylalanine--D-glutamate ligase.